The sequence spans 75 residues: RNA-binding protein KhpA (75 aa).

Residues 29-75 (SIIIELKVAPEDMGKVIGKQGRIAQAIRTLVKAAALKEKKRVIVEII) enclose the KH domain.

The protein belongs to the KhpA RNA-binding protein family. As to quaternary structure, forms a complex with KhpB.

It localises to the cytoplasm. Functionally, a probable RNA chaperone. Forms a complex with KhpB which binds to cellular RNA and controls its expression. Plays a role in peptidoglycan (PG) homeostasis and cell length regulation. The sequence is that of RNA-binding protein KhpA from Caldanaerobacter subterraneus subsp. tengcongensis (strain DSM 15242 / JCM 11007 / NBRC 100824 / MB4) (Thermoanaerobacter tengcongensis).